The primary structure comprises 158 residues: Transcription elongation factor GreA (158 aa).

Positions 53-73 (EQQSFVEGRIQEIEGKLSNAQ) form a coiled coil.

Belongs to the GreA/GreB family.

Necessary for efficient RNA polymerase transcription elongation past template-encoded arresting sites. The arresting sites in DNA have the property of trapping a certain fraction of elongating RNA polymerases that pass through, resulting in locked ternary complexes. Cleavage of the nascent transcript by cleavage factors such as GreA or GreB allows the resumption of elongation from the new 3'terminus. GreA releases sequences of 2 to 3 nucleotides. The sequence is that of Transcription elongation factor GreA from Alkalilimnicola ehrlichii (strain ATCC BAA-1101 / DSM 17681 / MLHE-1).